Consider the following 990-residue polypeptide: MKIVTYNQLQEAFRDYSPRDFAISRDNVFRVMRIYYNENVGQLVAFCNTQLAGRLAQFYFTIKMDLYSYKQCYNSHIFATCRNRCSSYNTFVAPGVKNVYMDKINVIKFKRNGSSFGEKAAALDKFLHNANRVHMQTPVIEGTYMRFRRAQRCRNNCVTDDARPFELERFADDFQVVNPATLTTKIEPVMACFDIETHSDGHNSSKPECDVIMCIGLAVLKDNRYDKICFVYHKELVEISGNDEYTHVVVFNNESHMIASFFDFFKYANPDVILDYNGDVFDLPYIRGRLKGDKPLLGRYDLPALQPNTKLFITKIGNRTDTYYFNYYIHIDLYKYFGADANKRDVENFELNTLSQYYLNDNKVDLNWQTMVAMYNNKQLGTMIDYNLKDCLLPIRLFNKLKLNDFMYSQCLMYRLCTDDFICNISHLISSTFFHLALTNTRTDPVTGLVVHDPYFFNKDDLGRMSSKDAGFCAGMSRLQRKRIPLKDLPANSIRLGAINEIVNYEGGKVLQPRAGVYEFAFSLDFNSLYLTIMIDICACLTNLILCEDGNVYLNQDKQAINVQLLLQLLKQRSELKKCRDSQTDSEFLYDLYDQMQNLSKRTANSIYGYYGIFCKLLANYITRVGREKLTAAIGMIEGLSNDAELLSKFNLSTLTFRVLYGDTDSTFVLPTFKRDEIPEESCMVTLTRICAAVETRVNGLFANGYKMAFENLMSVLILLKKKKYCYINSANKIVFKGWLVKKDMPVFMRVAFRTAIEQVLRHQDLQKCLDSLLINMLMYFDAFGTTKPLTDYSFSMTYNDGAGKVTENESRPTKRRVVTVARHCREILLNKGTDFVPGNGDRIPYVLLDIQGSVTQKAYPLRLFDPRTMRISWLKHMTILNTFMNELLEIFGDEHTSALNKCYDAILTKYMQHQAYDKKRVTLIKINAAYKRKAPSDDAARKRARAGPSALRKQKAASNDEDSSDEDDEDCSQAIGSNNTFKFSLYKYK.

A disordered region spans residues 936-976 (PSDDAARKRARAGPSALRKQKAASNDEDSSDEDDEDCSQAI). A compositionally biased stretch (acidic residues) spans 960-972 (NDEDSSDEDDEDC).

Belongs to the DNA polymerase type-B family.

It catalyses the reaction DNA(n) + a 2'-deoxyribonucleoside 5'-triphosphate = DNA(n+1) + diphosphate. Replicates the viral genome, host DNA polymerases cannot substitute for the viral enzyme in this process. The protein is DNA polymerase (POL) of Choristoneura fumiferana (Spruce budworm moth).